The primary structure comprises 256 residues: 5'-nucleotidase SurE (256 aa).

Aspartate 8, aspartate 9, serine 39, and asparagine 95 together coordinate a divalent metal cation.

This sequence belongs to the SurE nucleotidase family. It depends on a divalent metal cation as a cofactor.

Its subcellular location is the cytoplasm. The catalysed reaction is a ribonucleoside 5'-phosphate + H2O = a ribonucleoside + phosphate. Functionally, nucleotidase that shows phosphatase activity on nucleoside 5'-monophosphates. The sequence is that of 5'-nucleotidase SurE from Methanosphaera stadtmanae (strain ATCC 43021 / DSM 3091 / JCM 11832 / MCB-3).